The sequence spans 166 residues: Small ribosomal subunit protein uS9 (166 aa).

A disordered region spans residues 135–166 (KKAGFLTRDPRATERKKYGLKKARKAPQYSKR). A compositionally biased stretch (basic and acidic residues) spans 142 to 151 (RDPRATERKK). A compositionally biased stretch (basic residues) spans 152-166 (YGLKKARKAPQYSKR).

It belongs to the universal ribosomal protein uS9 family.

The polypeptide is Small ribosomal subunit protein uS9 (Mycobacterium avium (strain 104)).